The primary structure comprises 101 residues: Urease subunit beta (101 aa).

The protein belongs to the urease beta subunit family. Heterotrimer of UreA (gamma), UreB (beta) and UreC (alpha) subunits. Three heterotrimers associate to form the active enzyme.

The protein resides in the cytoplasm. The catalysed reaction is urea + 2 H2O + H(+) = hydrogencarbonate + 2 NH4(+). It participates in nitrogen metabolism; urea degradation; CO(2) and NH(3) from urea (urease route): step 1/1. The protein is Urease subunit beta of Cereibacter sphaeroides (strain ATCC 17025 / ATH 2.4.3) (Rhodobacter sphaeroides).